Consider the following 466-residue polypeptide: Ribosomal protein uS12 methylthiotransferase RimO (466 aa).

The MTTase N-terminal domain occupies 31–141 (PTIGMVSLGC…VLDAVHGAVP (111 aa)). Cys-40, Cys-76, Cys-105, Cys-172, Cys-176, and Cys-179 together coordinate [4Fe-4S] cluster. In terms of domain architecture, Radical SAM core spans 158 to 397 (LTPRHYSYLK…MAKAQAISEA (240 aa)). The TRAM domain occupies 400–466 (AARVGQVIEV…GEYDLWGRLR (67 aa)).

It belongs to the methylthiotransferase family. RimO subfamily. Requires [4Fe-4S] cluster as cofactor.

Its subcellular location is the cytoplasm. The catalysed reaction is L-aspartate(89)-[ribosomal protein uS12]-hydrogen + (sulfur carrier)-SH + AH2 + 2 S-adenosyl-L-methionine = 3-methylsulfanyl-L-aspartate(89)-[ribosomal protein uS12]-hydrogen + (sulfur carrier)-H + 5'-deoxyadenosine + L-methionine + A + S-adenosyl-L-homocysteine + 2 H(+). In terms of biological role, catalyzes the methylthiolation of an aspartic acid residue of ribosomal protein uS12. This is Ribosomal protein uS12 methylthiotransferase RimO from Ruegeria pomeroyi (strain ATCC 700808 / DSM 15171 / DSS-3) (Silicibacter pomeroyi).